The primary structure comprises 153 residues: MRCPSCFHNGTRVLDSRPVDEGRSIRRRRECESCLNRFTTFERVEEPPLIVVKKEGTREEFNKEKILRGLIKACEKRPVSLKQLEEVTQNVERELRNLGISEVKSDMIGEIVMEALRDIDDVAYVRFASVYRQFKDLNVFIEELKDILQKERE.

A zinc finger spans residues 3-34; that stretch reads CPSCFHNGTRVLDSRPVDEGRSIRRRRECESC. Residues 49-139 enclose the ATP-cone domain; that stretch reads LIVVKKEGTR…VYRQFKDLNV (91 aa).

This sequence belongs to the NrdR family. The cofactor is Zn(2+).

Functionally, negatively regulates transcription of bacterial ribonucleotide reductase nrd genes and operons by binding to NrdR-boxes. The sequence is that of Transcriptional repressor NrdR from Bacillus cytotoxicus (strain DSM 22905 / CIP 110041 / 391-98 / NVH 391-98).